The sequence spans 84 residues: Small ribosomal subunit protein uS17 (84 aa).

The protein belongs to the universal ribosomal protein uS17 family. In terms of assembly, part of the 30S ribosomal subunit.

One of the primary rRNA binding proteins, it binds specifically to the 5'-end of 16S ribosomal RNA. This is Small ribosomal subunit protein uS17 from Borrelia duttonii (strain Ly).